We begin with the raw amino-acid sequence, 55 residues long: MAKEGPRIIVKMESTAGTGFYYTTTKNRRNTQAKLELRKYDPVAKKHVVFKEKKV.

The protein belongs to the bacterial ribosomal protein bL33 family.

The chain is Large ribosomal subunit protein bL33 from Deinococcus geothermalis (strain DSM 11300 / CIP 105573 / AG-3a).